The chain runs to 87 residues: DNA-directed RNA polymerase subunit omega (87 aa).

The protein belongs to the RNA polymerase subunit omega family. The RNAP catalytic core consists of 2 alpha, 1 beta, 1 beta' and 1 omega subunit. When a sigma factor is associated with the core the holoenzyme is formed, which can initiate transcription.

It catalyses the reaction RNA(n) + a ribonucleoside 5'-triphosphate = RNA(n+1) + diphosphate. In terms of biological role, promotes RNA polymerase assembly. Latches the N- and C-terminal regions of the beta' subunit thereby facilitating its interaction with the beta and alpha subunits. The protein is DNA-directed RNA polymerase subunit omega of Azotobacter vinelandii (strain DJ / ATCC BAA-1303).